We begin with the raw amino-acid sequence, 494 residues long: Probable cytosol aminopeptidase (494 aa).

The Mn(2+) site is built by K260 and D265. K272 is an active-site residue. D283, D342, and E344 together coordinate Mn(2+). The active site involves R346.

It belongs to the peptidase M17 family. Mn(2+) serves as cofactor.

It localises to the cytoplasm. It catalyses the reaction Release of an N-terminal amino acid, Xaa-|-Yaa-, in which Xaa is preferably Leu, but may be other amino acids including Pro although not Arg or Lys, and Yaa may be Pro. Amino acid amides and methyl esters are also readily hydrolyzed, but rates on arylamides are exceedingly low.. It carries out the reaction Release of an N-terminal amino acid, preferentially leucine, but not glutamic or aspartic acids.. Functionally, presumably involved in the processing and regular turnover of intracellular proteins. Catalyzes the removal of unsubstituted N-terminal amino acids from various peptides. This is Probable cytosol aminopeptidase from Bacillus cereus (strain ATCC 10987 / NRS 248).